The following is an 843-amino-acid chain: MPLSYQHFRRLLLLDNEAGPLEEELPRLADEDLNHRVAEDLNLQLPNVSIPWTHKVGNFTGLYSSTVPVFNPDWLTPSFPDIHLHQDLIQKCEQFVGPLTKNEVRRLKLIMPARFYPKVTKYFPLDKGIKPYYPEHVVNHYFKTRHYLHTLWKAGILYKRESTHSASFCGSPYSWEQELQHGSTSLNGEKGHGTESFCAQSSGILSRPPVGSTIQSKFQQSRLGLQHKQGQLANGKQGRSGRLWSRVHTPTRWPSGVEPSGTGHSDNLATRSTSRFHQSEVRKETNPSLSTSKGHTSTGHAVELNTVPPSTVGSESKGSVSSCWWLQFRNTEPCSDYCLSHIINLLEDWGPCYEHGEHHIRTPRTPSRVTGGVFLVDKNPHNTTESRLVVDFSQFSRGTTRVSWPKFAVPNLQSLTNLLSSNLSWLSLDVSAAFYHLPLHPAAMPHLLVGSSGLSRYVARVSSTSRIYNHQHGSLQNLHHSCSRNLYVSLLLLYQTFGRKLHLYSHPIILGFRKIPMGVGLSPFLLAQFTSAICSVVRRAFPHCLAFSYMDDLVLGAKSVQHLESLYTAVTNFLLSVGIHLNTAKTKWWGYSLHFMGYIIGSWGTLPQEHIVQKIKDCFRKLPVNRPIDWKVCQRIVGLLGFAAPFTQCGYPALMPLYACITAKQAFVFSPTYKAFLCKQYMNLYPVARQRPGLCQVFADATPTGWGLAIGHQRMRGTFVAPLPIHTAELLAACFARSRSGADIIGTDNSVVLSRKYTSFPWLLGCAANWILRGTSFVYVPSALNPADDPSRGRLGLCRPLLRLPFRPTTGRTSLYADSPPVPSHLPARVHFASPLHVAWRPP.

The terminal protein domain (TP) stretch occupies residues 1 to 177 (MPLSYQHFRR…FCGSPYSWEQ (177 aa)). The segment at 178–346 (ELQHGSTSLN…YCLSHIINLL (169 aa)) is spacer. Residues 228–316 (KQGQLANGKQ…VPPSTVGSES (89 aa)) form a disordered region. Polar residues-rich tracts occupy residues 262 to 276 (TGHSDNLATRSTSRF), 286 to 299 (NPSLSTSKGHTSTG), and 307 to 316 (VPPSTVGSES). The tract at residues 347 to 690 (EDWGPCYEHG…YMNLYPVARQ (344 aa)) is polymerase/reverse transcriptase domain (RT). In terms of domain architecture, Reverse transcriptase spans 357–600 (EHHIRTPRTP…YSLHFMGYII (244 aa)). Residues Asp429, Asp551, and Asp552 each coordinate Mg(2+).

The protein belongs to the hepadnaviridae P protein family.

It catalyses the reaction DNA(n) + a 2'-deoxyribonucleoside 5'-triphosphate = DNA(n+1) + diphosphate. It carries out the reaction Endonucleolytic cleavage to 5'-phosphomonoester.. Its activity is regulated as follows. Activated by host HSP70 and HSP40 in vitro to be able to bind the epsilon loop of the pgRNA. Because deletion of the RNase H region renders the protein partly chaperone-independent, the chaperones may be needed indirectly to relieve occlusion of the RNA-binding site by this domain. Inhibited by several reverse-transcriptase inhibitors: Lamivudine, Adefovir and Entecavir. In terms of biological role, multifunctional enzyme that converts the viral RNA genome into dsDNA in viral cytoplasmic capsids. This enzyme displays a DNA polymerase activity that can copy either DNA or RNA templates, and a ribonuclease H (RNase H) activity that cleaves the RNA strand of RNA-DNA heteroduplexes in a partially processive 3'- to 5'-endonucleasic mode. Neo-synthesized pregenomic RNA (pgRNA) are encapsidated together with the P protein, and reverse-transcribed inside the nucleocapsid. Initiation of reverse-transcription occurs first by binding the epsilon loop on the pgRNA genome, and is initiated by protein priming, thereby the 5'-end of (-)DNA is covalently linked to P protein. Partial (+)DNA is synthesized from the (-)DNA template and generates the relaxed circular DNA (RC-DNA) genome. After budding and infection, the RC-DNA migrates in the nucleus, and is converted into a plasmid-like covalently closed circular DNA (cccDNA). The activity of P protein does not seem to be necessary for cccDNA generation, and is presumably released from (+)DNA by host nuclear DNA repair machinery. The protein is Protein P of Homo sapiens (Human).